The primary structure comprises 131 residues: Small ribosomal subunit protein bS6 (131 aa).

Residues serine 100–glutamate 131 form a disordered region. Basic and acidic residues predominate over residues lysine 104–serine 115. Residues alanine 119–glutamate 131 show a composition bias toward acidic residues.

The protein belongs to the bacterial ribosomal protein bS6 family.

Functionally, binds together with bS18 to 16S ribosomal RNA. The polypeptide is Small ribosomal subunit protein bS6 (Photorhabdus laumondii subsp. laumondii (strain DSM 15139 / CIP 105565 / TT01) (Photorhabdus luminescens subsp. laumondii)).